Here is a 309-residue protein sequence, read N- to C-terminus: Probable manganese-dependent inorganic pyrophosphatase (309 aa).

Mn(2+)-binding residues include His-9, Asp-13, Asp-15, Asp-75, His-97, and Asp-149.

Belongs to the PPase class C family. Mn(2+) is required as a cofactor.

The protein resides in the cytoplasm. It catalyses the reaction diphosphate + H2O = 2 phosphate + H(+). This Staphylococcus saprophyticus subsp. saprophyticus (strain ATCC 15305 / DSM 20229 / NCIMB 8711 / NCTC 7292 / S-41) protein is Probable manganese-dependent inorganic pyrophosphatase.